Consider the following 333-residue polypeptide: Delta-aminolevulinic acid dehydratase (333 aa).

C127, C129, and C137 together coordinate Zn(2+). The Schiff-base intermediate with substrate role is filled by K204. 5-aminolevulinate is bound by residues R214 and R226. K257 functions as the Schiff-base intermediate with substrate in the catalytic mechanism. S283 and Y322 together coordinate 5-aminolevulinate.

It belongs to the ALAD family. In terms of assembly, homooctamer. The cofactor is Zn(2+).

It carries out the reaction 2 5-aminolevulinate = porphobilinogen + 2 H2O + H(+). It functions in the pathway porphyrin-containing compound metabolism; protoporphyrin-IX biosynthesis; coproporphyrinogen-III from 5-aminolevulinate: step 1/4. In terms of biological role, catalyzes an early step in the biosynthesis of tetrapyrroles. Binds two molecules of 5-aminolevulinate per subunit, each at a distinct site, and catalyzes their condensation to form porphobilinogen. The protein is Delta-aminolevulinic acid dehydratase (alad) of Dictyostelium discoideum (Social amoeba).